The following is a 441-amino-acid chain: 3-phosphoshikimate 1-carboxyvinyltransferase (441 aa).

The 3-phosphoshikimate site is built by K26, S27, and R31. K26 contributes to the phosphoenolpyruvate binding site. Phosphoenolpyruvate contacts are provided by G99 and R127. Residues S173, S174, Q175, S203, D320, and K347 each contribute to the 3-phosphoshikimate site. Residue Q175 coordinates phosphoenolpyruvate. Residue D320 is the Proton acceptor of the active site. Residues R351, R393, and K423 each contribute to the phosphoenolpyruvate site.

The protein belongs to the EPSP synthase family. Monomer.

It is found in the cytoplasm. It carries out the reaction 3-phosphoshikimate + phosphoenolpyruvate = 5-O-(1-carboxyvinyl)-3-phosphoshikimate + phosphate. Its pathway is metabolic intermediate biosynthesis; chorismate biosynthesis; chorismate from D-erythrose 4-phosphate and phosphoenolpyruvate: step 6/7. Catalyzes the transfer of the enolpyruvyl moiety of phosphoenolpyruvate (PEP) to the 5-hydroxyl of shikimate-3-phosphate (S3P) to produce enolpyruvyl shikimate-3-phosphate and inorganic phosphate. The protein is 3-phosphoshikimate 1-carboxyvinyltransferase of Janthinobacterium sp. (strain Marseille) (Minibacterium massiliensis).